Consider the following 228-residue polypeptide: Uracil-DNA glycosylase (228 aa).

Catalysis depends on Asp-65, which acts as the Proton acceptor.

The protein belongs to the uracil-DNA glycosylase (UDG) superfamily. UNG family.

The protein resides in the cytoplasm. The catalysed reaction is Hydrolyzes single-stranded DNA or mismatched double-stranded DNA and polynucleotides, releasing free uracil.. Its function is as follows. Excises uracil residues from the DNA which can arise as a result of misincorporation of dUMP residues by DNA polymerase or due to deamination of cytosine. The protein is Uracil-DNA glycosylase of Lacticaseibacillus paracasei (strain ATCC 334 / BCRC 17002 / CCUG 31169 / CIP 107868 / KCTC 3260 / NRRL B-441) (Lactobacillus paracasei).